We begin with the raw amino-acid sequence, 704 residues long: SH3KBP1-binding protein 1 (704 aa).

Ala2 carries the post-translational modification N-acetylalanine. The BTB domain occupies 19-88 (EVIHLNVGGK…LRTKELDPRG (70 aa)). The segment at 145-165 (LVGPQQAGGRPAPVRRSNTMP) is disordered. Thr163 carries the post-translational modification Phosphothreonine. WD repeat units lie at residues 233-280 (RLDW…GGSE), 283-322 (VFHL…WQVQ), 324-359 (VQPI…LRMK), 428-466 (VHRS…GMIS), and 548-586 (LECE…DGLG). Residues 611–644 (ASSRGSLPSPSPRTSLTSLHSAFSNTSLSSRRGS) show a composition bias toward low complexity. The disordered stretch occupies residues 611 to 704 (ASSRGSLPSP…PKTKLNETSF (94 aa)). Residues 618 to 623 (PSPSPR) carry the PXXXPR motif. Ser644 and Ser646 each carry phosphoserine. The PXXXPR motif lies at 678 to 683 (PTPAPR).

This sequence belongs to the KCTD3 family. Monomer. Interacts with CUL3; interaction is direct and forms a 5:5 heterodecamer. Interacts (via PXXXPR motifs) with SH3KBP1 (via SH3 domains). Directly interacts with cathepsin B/CTSB.

The protein resides in the lysosome. Functionally, inhibits CBL-SH3KBP1 complex mediated down-regulation of EGFR signaling by sequestration of SH3KBP1. Binds to SH3KBP1 and prevents its interaction with CBL and inhibits translocation of SH3KBP1 to EGFR containing vesicles upon EGF stimulation. The sequence is that of SH3KBP1-binding protein 1 (SHKBP1) from Bos taurus (Bovine).